The following is a 1407-amino-acid chain: YEATS domain-containing protein 2 (1407 aa).

A Glycyl lysine isopeptide (Lys-Gly) (interchain with G-Cter in SUMO2) cross-link involves residue Lys9. Positions 54-80 (MKNKEHEIDVIDQRLIEARRMMDKLRA) form a coiled coil. A Glycyl lysine isopeptide (Lys-Gly) (interchain with G-Cter in SUMO2) cross-link involves residue Lys113. Positions 116-196 (LESPSRSSSP…SHKRELRNAD (81 aa)) are disordered. Residues Ser118, Ser120, and Ser157 each carry the phosphoserine modification. Over residues 119-148 (PSRSSSPTNQRSETPSANHSESDSLSQHND) the composition is skewed to polar residues. Basic and acidic residues predominate over residues 149-165 (FLSDKDNNSNVDVEERP). Lys189 participates in a covalent cross-link: Glycyl lysine isopeptide (Lys-Gly) (interchain with G-Cter in SUMO2). A YEATS domain is found at 201 to 346 (ETSRLFVKKT…EDSVYPQSSE (146 aa)). 2 histone H3K27cr binding regions span residues 260 to 262 (HPS) and 283 to 285 (WGE). At Thr406 the chain carries Phosphothreonine. Phosphoserine occurs at positions 446, 462, 464, 470, and 472. Positions 462–540 (SGSPISTPSP…GTGSPIPKIH (79 aa)) are disordered. Thr477 carries the post-translational modification Phosphothreonine. Residue Lys486 forms a Glycyl lysine isopeptide (Lys-Gly) (interchain with G-Cter in SUMO2) linkage. A compositionally biased stretch (low complexity) spans 511–520 (STPSTGSPTS). Ser534 bears the Phosphoserine mark. Residue Lys550 forms a Glycyl lysine isopeptide (Lys-Gly) (interchain with G-Cter in SUMO2) linkage. Ser573 carries the post-translational modification Phosphoserine. Residue Lys590 forms a Glycyl lysine isopeptide (Lys-Gly) (interchain with G-Cter in SUMO2) linkage. Residue Ser625 is modified to Phosphoserine. Residues Lys647 and Lys771 each participate in a glycyl lysine isopeptide (Lys-Gly) (interchain with G-Cter in SUMO2) cross-link. The disordered stretch occupies residues 791–833 (SGSAAAGGSGSSGAGGGSGGGGGSGAGGTPSTSGPGGGPQHLT). Residues 795–829 (AAGGSGSSGAGGGSGGGGGSGAGGTPSTSGPGGGP) are compositionally biased toward gly residues. Lys908 is covalently cross-linked (Glycyl lysine isopeptide (Lys-Gly) (interchain with G-Cter in SUMO2)). A Glycyl lysine isopeptide (Lys-Gly) (interchain with G-Cter in SUMO1); alternate cross-link involves residue Lys1095. Residue Lys1095 forms a Glycyl lysine isopeptide (Lys-Gly) (interchain with G-Cter in SUMO2); alternate linkage. A Glycyl lysine isopeptide (Lys-Gly) (interchain with G-Cter in SUMO2) cross-link involves residue Lys1115. Thr1204 carries the post-translational modification Phosphothreonine. Glycyl lysine isopeptide (Lys-Gly) (interchain with G-Cter in SUMO2) cross-links involve residues Lys1207 and Lys1270.

As to quaternary structure, component of the ADA2A-containing complex (ATAC), composed of KAT14, KAT2A, TADA2L, TADA3L, ZZ3, MBIP, WDR5, YEATS2, SGF29 and DR1.

Its subcellular location is the nucleus. Its function is as follows. Chromatin reader component of the ATAC complex, a complex with histone acetyltransferase activity on histones H3 and H4. YEATS2 specifically recognizes and binds histone H3 crotonylated at 'Lys-27' (H3K27cr). Crotonylation marks active promoters and enhancers and confers resistance to transcriptional repressors. This chain is YEATS domain-containing protein 2, found in Mus musculus (Mouse).